Consider the following 266-residue polypeptide: 3-methyl-2-oxobutanoate hydroxymethyltransferase (266 aa).

Mg(2+) contacts are provided by D45 and D84. Residues 45–46, D84, and K112 contribute to the 3-methyl-2-oxobutanoate site; that span reads DS. A Mg(2+)-binding site is contributed by E114. Residue E181 is the Proton acceptor of the active site.

This sequence belongs to the PanB family. Homodecamer; pentamer of dimers. Mg(2+) serves as cofactor.

The protein localises to the cytoplasm. The enzyme catalyses 3-methyl-2-oxobutanoate + (6R)-5,10-methylene-5,6,7,8-tetrahydrofolate + H2O = 2-dehydropantoate + (6S)-5,6,7,8-tetrahydrofolate. The protein operates within cofactor biosynthesis; (R)-pantothenate biosynthesis; (R)-pantoate from 3-methyl-2-oxobutanoate: step 1/2. In terms of biological role, catalyzes the reversible reaction in which hydroxymethyl group from 5,10-methylenetetrahydrofolate is transferred onto alpha-ketoisovalerate to form ketopantoate. In Pseudomonas syringae pv. syringae (strain B728a), this protein is 3-methyl-2-oxobutanoate hydroxymethyltransferase.